A 35-amino-acid chain; its full sequence is Surfactant protein C (35 aa).

Residues C5 and C6 are each lipidated (S-palmitoyl cysteine).

It localises to the secreted. It is found in the extracellular space. Its subcellular location is the surface film. Pulmonary surfactant associated proteins promote alveolar stability by lowering the surface tension at the air-liquid interface in the peripheral air spaces. The chain is Surfactant protein C (SFTPC) from Sus scrofa (Pig).